Here is a 144-residue protein sequence, read N- to C-terminus: Cysteine-rich tail protein 1 (144 aa).

The disordered stretch occupies residues 51 to 105; it reads APEPTHLLQPTEVPGPKGAKGNQGAAPIQNQQAWQQPGNPYSSSQRQAGLTYAGP. The span at 78–98 shows a compositional bias: polar residues; sequence IQNQQAWQQPGNPYSSSQRQA.

The protein belongs to the CYSRT1 family. Interacts with LCE1B; the interaction is direct. Interacts with LCE2C; the interaction is direct. Interacts with LCE3A; the interaction is direct. Interacts with LCE3C; the interaction is direct. Interacts with LCE4A; the interaction is direct. Interacts with LCE5A; the interaction is direct. Interacts with LCE1C. Interacts with LCE1D. Interacts with LCE1E. Interacts with LCE2A. Interacts with LCE3D. Interacts with LCE3E. Interacts with LCE1A. Expressed in the stratum granulosum, in skin and oral epithelia (at protein level).

It localises to the cornified envelope. Functionally, component of the stratum corneum that may contribute to epidermal antimicrobial host defenses. The polypeptide is Cysteine-rich tail protein 1 (CYSRT1) (Homo sapiens (Human)).